The sequence spans 174 residues: Dual-action ribosomal maturation protein DarP (174 aa).

The protein belongs to the DarP family.

The protein localises to the cytoplasm. Member of a network of 50S ribosomal subunit biogenesis factors which assembles along the 30S-50S interface, preventing incorrect 23S rRNA structures from forming. Promotes peptidyl transferase center (PTC) maturation. This is Dual-action ribosomal maturation protein DarP from Vibrio atlanticus (strain LGP32) (Vibrio splendidus (strain Mel32)).